Reading from the N-terminus, the 311-residue chain is Cell division control protein 2 homolog 3 (311 aa).

Residues 23–306 (YNRMDILGEG…AKAALQHPWF (284 aa)) enclose the Protein kinase domain. ATP-binding positions include 29 to 37 (LGEGTYGVV) and Lys52. At Thr33 the chain carries Phosphothreonine. Tyr34 bears the Phosphotyrosine mark. The Proton acceptor role is filled by Asp145.

The protein belongs to the protein kinase superfamily. CMGC Ser/Thr protein kinase family. CDC2/CDKX subfamily. As to quaternary structure, forms a stable but non-covalent complex with a regulatory subunit and with a cyclin.

It catalyses the reaction L-seryl-[protein] + ATP = O-phospho-L-seryl-[protein] + ADP + H(+). It carries out the reaction L-threonyl-[protein] + ATP = O-phospho-L-threonyl-[protein] + ADP + H(+). Its activity is regulated as follows. Phosphorylation at Thr-33 or Tyr-34 inactivates the enzyme. Probably involved in the control of the cell cycle. The chain is Cell division control protein 2 homolog 3 (CRK3) from Trypanosoma brucei brucei.